The sequence spans 49 residues: Large ribosomal subunit protein bL33C (49 aa).

The segment at 21–49 (KNKRNNPDRVEFKKYCPRDKKSTLHRETK) is disordered. Residues 25–49 (NNPDRVEFKKYCPRDKKSTLHRETK) are compositionally biased toward basic and acidic residues.

The protein belongs to the bacterial ribosomal protein bL33 family.

This chain is Large ribosomal subunit protein bL33C, found in Bacillus licheniformis (strain ATCC 14580 / DSM 13 / JCM 2505 / CCUG 7422 / NBRC 12200 / NCIMB 9375 / NCTC 10341 / NRRL NRS-1264 / Gibson 46).